Consider the following 110-residue polypeptide: Small ribosomal subunit protein eS24 (110 aa).

The tract at residues 91-110 (RNKVEEQAEEAEEAEAGAAE) is disordered. A compositionally biased stretch (acidic residues) spans 97–110 (QAEEAEEAEAGAAE).

It belongs to the eukaryotic ribosomal protein eS24 family.

This Archaeoglobus fulgidus (strain ATCC 49558 / DSM 4304 / JCM 9628 / NBRC 100126 / VC-16) protein is Small ribosomal subunit protein eS24.